A 304-amino-acid chain; its full sequence is Recombination-associated protein RdgC (304 aa).

This sequence belongs to the RdgC family.

It is found in the cytoplasm. The protein localises to the nucleoid. Its function is as follows. May be involved in recombination. This is Recombination-associated protein RdgC from Shewanella oneidensis (strain ATCC 700550 / JCM 31522 / CIP 106686 / LMG 19005 / NCIMB 14063 / MR-1).